We begin with the raw amino-acid sequence, 344 residues long: MVTERQQDILNLIIDIFTKTHEPVGSKALQESINSSSATIRNDMAELEKQGLLEKAHTSSGRMPSVAGFQYYVKHSLDFDRLAENEVYEIVKAFDQEFFKLEDILQEAANLLTDLSGCTVVALDVEPSRQRLTAFDIVVLGQHTALAVFTLDESRTVTSQFLIPRNFLQEDLLKLKSIIQERFLGHTVLDIHYKIRTEIPQIIQRYFTTTDNVIDLFEHIFKEMFNENIVMAGKVHLLNFANLAAYQFFDQPQKVALEIREGLREEQMQNVRVADGQESCLADLAVISSKFLIPYRGVGILAIIGPVNLDYQQLINQVNVVNRVLTMKLTDFYRYLSSNHYEVH.

This sequence belongs to the HrcA family.

Its function is as follows. Negative regulator of class I heat shock genes (grpE-dnaK-dnaJ and groELS operons). Prevents heat-shock induction of these operons. This is Heat-inducible transcription repressor HrcA from Streptococcus pneumoniae (strain Taiwan19F-14).